Reading from the N-terminus, the 528-residue chain is Glucans biosynthesis protein G 2 (528 aa).

A signal peptide spans 1 to 44; that stretch reads MRLHLTFNHSTPATGRKNTKHTLFFGSMLACIISIISLVVPAYG.

It belongs to the OpgD/OpgG family.

It is found in the periplasm. It participates in glycan metabolism; osmoregulated periplasmic glucan (OPG) biosynthesis. In terms of biological role, involved in the biosynthesis of osmoregulated periplasmic glucans (OPGs). The protein is Glucans biosynthesis protein G 2 (opgG2) of Shewanella oneidensis (strain ATCC 700550 / JCM 31522 / CIP 106686 / LMG 19005 / NCIMB 14063 / MR-1).